Consider the following 289-residue polypeptide: Polyamine aminopropyltransferase (289 aa).

The PABS domain maps to 5–245 (PGPITLIEPL…YAVNFILGSL (241 aa)). Gln-36 provides a ligand contact to S-methyl-5'-thioadenosine. Spermidine is bound by residues His-67 and Glu-91. S-methyl-5'-thioadenosine-binding positions include Asp-111 and 143–144 (DG). Asp-164 acts as the Proton acceptor in catalysis.

It belongs to the spermidine/spermine synthase family. In terms of assembly, homodimer or homotetramer.

Its subcellular location is the cytoplasm. The enzyme catalyses S-adenosyl 3-(methylsulfanyl)propylamine + putrescine = S-methyl-5'-thioadenosine + spermidine + H(+). The protein operates within amine and polyamine biosynthesis; spermidine biosynthesis; spermidine from putrescine: step 1/1. Catalyzes the irreversible transfer of a propylamine group from the amino donor S-adenosylmethioninamine (decarboxy-AdoMet) to putrescine (1,4-diaminobutane) to yield spermidine. The protein is Polyamine aminopropyltransferase of Pyrobaculum calidifontis (strain DSM 21063 / JCM 11548 / VA1).